A 513-amino-acid chain; its full sequence is Putative thymidine phosphorylase (513 aa).

It belongs to the thymidine/pyrimidine-nucleoside phosphorylase family. Type 2 subfamily.

The enzyme catalyses thymidine + phosphate = 2-deoxy-alpha-D-ribose 1-phosphate + thymine. This is Putative thymidine phosphorylase from Rhodopseudomonas palustris (strain BisB18).